Here is a 305-residue protein sequence, read N- to C-terminus: MSVDPACPQSLPCFEESDCKESSPMPVICGPEENYPSLQMSSAEMPHTETVSPLPSSMDLLIQDSPDSSTSPKGKQPTSAENSVAKKEDKVPVKKQKTRTVFSSTQLCVLNDRFQRQKYLSLQQMQELSNILNLSYKQVKTWFQNQRMKSKRWQKNNWPKNSNGVTQKASAPTYPSLYSSYHQGCLVNPTGNLPMWSNQTWNNSTWSNQTQNIQSWSNHSWNTQTWCTQSWNNQAWNSPFYNCGEESLQSCMHFQPNSPASDLEAALEAAGEGLNVIQQTTRYFSTPQTMDLFLNYSMNMQPEDV.

The tract at residues 1 to 96 is disordered; it reads MSVDPACPQS…KEDKVPVKKQ (96 aa). The segment covering 65 to 82 has biased composition (polar residues); sequence SPDSSTSPKGKQPTSAEN. Residues 95–154 constitute a DNA-binding region (homeobox); that stretch reads KQKTRTVFSSTQLCVLNDRFQRQKYLSLQQMQELSNILNLSYKQVKTWFQNQRMKSKRWQ. Repeat copies occupy residues 196–200, 201–205, 206–210, 216–220, 221–225, 226–230, 231–235, and 236–240. The interval 196–240 is 8 X repeats starting with a Trp in each unit; that stretch reads WSNQTWNNSTWSNQTQNIQSWSNHSWNTQTWCTQSWNNQAWNSPF. The sufficient for transactivation activity stretch occupies residues 196-240; it reads WSNQTWNNSTWSNQTQNIQSWSNHSWNTQTWCTQSWNNQAWNSPF. Residues 241 to 305 form a sufficient for strong transactivation activity region; sequence YNCGEESLQS…YSMNMQPEDV (65 aa).

It belongs to the Nanog homeobox family.

The protein localises to the nucleus. Functionally, may act as a transcription regulator. When overexpressed, promotes entry of cells into S phase and cell proliferation. The sequence is that of Homeobox protein NANOGP8 (NANOGP8) from Homo sapiens (Human).